Here is a 26-residue protein sequence, read N- to C-terminus: Histone H2B.1, sperm (26 aa).

The segment at 1–26 (MPSQKSPTKRSPTKRSPQKGGKGAKR) is disordered. 3 consecutive short sequence motifs (SPKK motif) follow at residues 6-9 (SPTK), 11-14 (SPTK), and 16-19 (SPQK). The span at 7–26 (PTKRSPTKRSPQKGGKGAKR) shows a compositional bias: basic residues. A phosphoserine mark is found at Ser-11 and Ser-16.

This sequence belongs to the histone H2B family. In terms of assembly, the nucleosome is a histone octamer containing two molecules each of H2A, H2B, H3 and H4 assembled in one H3-H4 heterotetramer and two H2A-H2B heterodimers. The octamer wraps approximately 147 bp of DNA. Post-translationally, monoubiquitination gives a specific tag for epigenetic transcriptional activation and is also prerequisite for histone H3 'Lys-4' and 'Lys-79' methylation. Phosphorylated on SPKK motifs 2 and 3; which may regulate DNA binding. Dephosphorylated during maturation of spermatids to mature sperm and rephosphorylated at fertilization.

The protein localises to the nucleus. It localises to the chromosome. Its function is as follows. Core component of nucleosome. Nucleosomes wrap and compact DNA into chromatin, limiting DNA accessibility to the cellular machineries which require DNA as a template. Histones thereby play a central role in transcription regulation, DNA repair, DNA replication and chromosomal stability. DNA accessibility is regulated via a complex set of post-translational modifications of histones, also called histone code, and nucleosome remodeling. The polypeptide is Histone H2B.1, sperm (Echinus esculentus (Sea urchin)).